We begin with the raw amino-acid sequence, 436 residues long: 3-ketoacyl-CoA thiolase (436 aa).

Cysteine 99 (acyl-thioester intermediate) is an active-site residue. Active-site proton acceptor residues include histidine 392 and cysteine 422.

Belongs to the thiolase-like superfamily. Thiolase family. As to quaternary structure, heterotetramer of two alpha chains (FadJ) and two beta chains (FadI).

Its subcellular location is the cytoplasm. It carries out the reaction an acyl-CoA + acetyl-CoA = a 3-oxoacyl-CoA + CoA. It functions in the pathway lipid metabolism; fatty acid beta-oxidation. Catalyzes the final step of fatty acid oxidation in which acetyl-CoA is released and the CoA ester of a fatty acid two carbons shorter is formed. The chain is 3-ketoacyl-CoA thiolase from Salmonella typhi.